We begin with the raw amino-acid sequence, 190 residues long: ADP-ribosylation factor F (190 aa).

GTP contacts are provided by residues 34–40 (DGAGKST), 75–79 (DIGGQ), and 136–139 (NKQD).

It belongs to the small GTPase superfamily. Arf family.

It is found in the golgi apparatus. GTP-binding protein that may be involved in protein trafficking. May modulate vesicle budding and uncoating within the Golgi apparatus. The protein is ADP-ribosylation factor F (arrF) of Dictyostelium discoideum (Social amoeba).